A 239-amino-acid chain; its full sequence is Ribonuclease PH (239 aa).

Phosphate contacts are provided by residues R87 and 125–127 (GTR).

The protein belongs to the RNase PH family. Homohexameric ring arranged as a trimer of dimers.

It catalyses the reaction tRNA(n+1) + phosphate = tRNA(n) + a ribonucleoside 5'-diphosphate. Functionally, phosphorolytic 3'-5' exoribonuclease that plays an important role in tRNA 3'-end maturation. Removes nucleotide residues following the 3'-CCA terminus of tRNAs; can also add nucleotides to the ends of RNA molecules by using nucleoside diphosphates as substrates, but this may not be physiologically important. Probably plays a role in initiation of 16S rRNA degradation (leading to ribosome degradation) during starvation. In Cyanothece sp. (strain PCC 7425 / ATCC 29141), this protein is Ribonuclease PH.